Here is a 315-residue protein sequence, read N- to C-terminus: Protoheme IX farnesyltransferase 1 (315 aa).

8 consecutive transmembrane segments (helical) span residues 30 to 50 (PGII…AWIQ), 56 to 76 (GGPG…LVMA), 106 to 126 (IPPP…FIML), 132 to 152 (LTAV…TLWF), 162 to 182 (VGSF…TGYI), 186 to 206 (AILL…AIGI), 249 to 269 (LYID…AIWL), and 289 to 309 (FFYS…DSFI).

This sequence belongs to the UbiA prenyltransferase family. Protoheme IX farnesyltransferase subfamily. In terms of assembly, interacts with CtaA.

It localises to the cell membrane. The enzyme catalyses heme b + (2E,6E)-farnesyl diphosphate + H2O = Fe(II)-heme o + diphosphate. Its pathway is porphyrin-containing compound metabolism; heme O biosynthesis; heme O from protoheme: step 1/1. In terms of biological role, converts heme B (protoheme IX) to heme O by substitution of the vinyl group on carbon 2 of heme B porphyrin ring with a hydroxyethyl farnesyl side group. This Bacillus velezensis (strain DSM 23117 / BGSC 10A6 / LMG 26770 / FZB42) (Bacillus amyloliquefaciens subsp. plantarum) protein is Protoheme IX farnesyltransferase 1.